A 462-amino-acid polypeptide reads, in one-letter code: Glycoprotein endo-alpha-1,2-mannosidase (462 aa).

The Cytoplasmic portion of the chain corresponds to 1–9; it reads MAKFRRRTC. The chain crosses the membrane as a helical; Signal-anchor for type II membrane protein span at residues 10 to 30; that stretch reads IILSLFIVFIFSLMMGLKMLW. Residues 31-462 are Lumenal-facing; sequence PNAASFGPPF…YALDQQLPAS (432 aa). The segment at 60-462 is catalytic; the sequence is DFQRSDRIDM…YALDQQLPAS (403 aa).

It belongs to the glycosyl hydrolase 99 family. Post-translationally, undergoes proteolytic cleavage in the C-terminal region. In terms of tissue distribution, highly expressed in the liver and kidney.

It is found in the golgi apparatus membrane. The enzyme catalyses N-{alpha-Glc-(1-&gt;3)-alpha-Man-(1-&gt;2)-alpha-Man-(1-&gt;2)-alpha-Man-(1-&gt;3)-[alpha-Man-(1-&gt;2)-alpha-Man-(1-&gt;3)-[alpha-Man-(1-&gt;2)-alpha-Man-(1-&gt;6)]-alpha-Man-(1-&gt;6)]-beta-Man-(1-&gt;4)-beta-GlcNAc-(1-&gt;4)-beta-GlcNAc}-L-asparaginyl-[protein] + H2O = alpha-D-glucosyl-(1-&gt;3)-D-mannopyranose + N(4)-{alpha-D-Man-(1-&gt;2)-alpha-D-Man-(1-&gt;3)-[alpha-D-Man-(1-&gt;2)-alpha-D-Man-(1-&gt;3)-[alpha-D-Man-(1-&gt;2)-alpha-D-Man-(1-&gt;6)]-alpha-D-Man-(1-&gt;6)]-beta-D-Man-(1-&gt;4)-beta-D-GlaNAc-(1-&gt;4)-beta-D-GlcNAc}-L-asparaginyl-[protein] (N-glucan mannose isomer 8A1,2,3B1,2). The polypeptide is Glycoprotein endo-alpha-1,2-mannosidase (Manea) (Rattus norvegicus (Rat)).